Consider the following 311-residue polypeptide: Succinate dehydrogenase [ubiquinone] iron-sulfur subunit 2, mitochondrial (311 aa).

Residues 1–63 constitute a mitochondrion transit peptide; sequence MILRRTLPRL…EEIRDHRRGD (63 aa). Positions 1–70 are disordered; the sequence is MILRRTLPRL…RGDAAAASPA (70 aa). A compositionally biased stretch (basic and acidic residues) spans 51–63; the sequence is AKEEEIRDHRRGD. A 2Fe-2S ferredoxin-type domain is found at 77–168; that stretch reads FRVYRWSPDA…ATTVTPLPHM (92 aa). [2Fe-2S] cluster contacts are provided by Cys128, Cys133, and Cys148. A 4Fe-4S ferredoxin-type domain is found at 211-241; it reads ERKRLDGLYECILCACCSAACPSYWWNAEAF. [4Fe-4S] cluster-binding residues include Cys221, Cys224, and Cys227. Residue Cys231 participates in [3Fe-4S] cluster binding. A ubiquinone is bound at residue Trp236. Residues Cys279 and Cys285 each coordinate [3Fe-4S] cluster. Cys289 is a [4Fe-4S] cluster binding site.

Belongs to the succinate dehydrogenase/fumarate reductase iron-sulfur protein family. In terms of assembly, component of complex II composed of eight subunits in plants: four classical SDH subunits SDH1, SDH2, SDH3 and SDH4 (a flavoprotein (FP), an iron-sulfur protein (IP), and a cytochrome b composed of a large and a small subunit.), as well as four subunits unknown in mitochondria from bacteria and heterotrophic eukaryotes. The cofactor is [2Fe-2S] cluster. It depends on [3Fe-4S] cluster as a cofactor. [4Fe-4S] cluster is required as a cofactor.

Its subcellular location is the mitochondrion inner membrane. It catalyses the reaction a quinone + succinate = fumarate + a quinol. Its pathway is carbohydrate metabolism; tricarboxylic acid cycle; fumarate from succinate (eukaryal route): step 1/1. In terms of biological role, iron-sulfur protein (IP) subunit of succinate dehydrogenase (SDH) that is involved in complex II of the mitochondrial electron transport chain and is responsible for transferring electrons from succinate to ubiquinone (coenzyme Q). This Oryza sativa subsp. japonica (Rice) protein is Succinate dehydrogenase [ubiquinone] iron-sulfur subunit 2, mitochondrial.